We begin with the raw amino-acid sequence, 264 residues long: Thiazole synthase (264 aa).

Lysine 106 serves as the catalytic Schiff-base intermediate with DXP. Residues glycine 167, 193–194 (AG), and 215–216 (NS) contribute to the 1-deoxy-D-xylulose 5-phosphate site.

This sequence belongs to the ThiG family. As to quaternary structure, homotetramer. Forms heterodimers with either ThiH or ThiS.

The protein localises to the cytoplasm. The enzyme catalyses [ThiS sulfur-carrier protein]-C-terminal-Gly-aminoethanethioate + 2-iminoacetate + 1-deoxy-D-xylulose 5-phosphate = [ThiS sulfur-carrier protein]-C-terminal Gly-Gly + 2-[(2R,5Z)-2-carboxy-4-methylthiazol-5(2H)-ylidene]ethyl phosphate + 2 H2O + H(+). Its pathway is cofactor biosynthesis; thiamine diphosphate biosynthesis. In terms of biological role, catalyzes the rearrangement of 1-deoxy-D-xylulose 5-phosphate (DXP) to produce the thiazole phosphate moiety of thiamine. Sulfur is provided by the thiocarboxylate moiety of the carrier protein ThiS. In vitro, sulfur can be provided by H(2)S. In Pseudomonas putida (strain W619), this protein is Thiazole synthase.